Reading from the N-terminus, the 231-residue chain is Ribosome maturation factor RimM (231 aa).

Positions 1–29 (MSERDSGSSGRAKAKRQPGAKAPFGPFVR) are disordered. Residues 150–231 (TDEYYWVDLV…KIIVDWEADY (82 aa)) enclose the PRC barrel domain.

Belongs to the RimM family. Binds ribosomal protein uS19.

It is found in the cytoplasm. An accessory protein needed during the final step in the assembly of 30S ribosomal subunit, possibly for assembly of the head region. Essential for efficient processing of 16S rRNA. May be needed both before and after RbfA during the maturation of 16S rRNA. It has affinity for free ribosomal 30S subunits but not for 70S ribosomes. The sequence is that of Ribosome maturation factor RimM from Paraburkholderia phymatum (strain DSM 17167 / CIP 108236 / LMG 21445 / STM815) (Burkholderia phymatum).